A 179-amino-acid polypeptide reads, in one-letter code: Translationally-controlled tumor protein homolog (179 aa).

A TCTP domain is found at 1-179 (MIIYKDIISG…WKHGLEEMKV (179 aa)).

It belongs to the TCTP family.

It is found in the cytoplasm. The protein localises to the cytoskeleton. Involved in protein synthesis. Involved in microtubule stabilization. The sequence is that of Translationally-controlled tumor protein homolog from Aspergillus fumigatus (strain ATCC MYA-4609 / CBS 101355 / FGSC A1100 / Af293) (Neosartorya fumigata).